The sequence spans 415 residues: All trans-polyprenyl-diphosphate synthase PDSS1 (415 aa).

Residues 16–35 are disordered; the sequence is PAARSPGPGSPGRAGPLGPS. Residues Lys-134, Arg-137, and His-173 each coordinate isopentenyl diphosphate. Mg(2+) contacts are provided by Asp-180 and Asp-184. Residue Arg-190 coordinates isopentenyl diphosphate.

The protein belongs to the FPP/GGPP synthase family. Heterotetramer composed of 2 PDSS1/DPS1 and 2 PDSS2/DLP1 subunits. Requires Mg(2+) as cofactor.

It is found in the mitochondrion. The catalysed reaction is 7 isopentenyl diphosphate + (2E,6E)-farnesyl diphosphate = all-trans-decaprenyl diphosphate + 7 diphosphate. It catalyses the reaction 6 isopentenyl diphosphate + (2E,6E)-farnesyl diphosphate = all-trans-nonaprenyl diphosphate + 6 diphosphate. Its pathway is cofactor biosynthesis; ubiquinone biosynthesis. Functionally, heterotetrameric enzyme that catalyzes the condensation of farnesyl diphosphate (FPP), which acts as a primer, and isopentenyl diphosphate (IPP) to produce prenyl diphosphates of varying chain lengths and participates in the determination of the side chain of ubiquinone. Supplies nona and decaprenyl diphosphate, the precursors for the side chain of the isoprenoid quinones ubiquinone-9 (Q9)and ubiquinone-10 (Q10) respectively. The enzyme adds isopentenyl diphosphate molecules sequentially to farnesyl diphosphate with trans stereochemistry. This is All trans-polyprenyl-diphosphate synthase PDSS1 from Homo sapiens (Human).